Reading from the N-terminus, the 600-residue chain is Autophagy-related protein 22-2 (600 aa).

The interval 1–30 (MAFASPPASPPDEDGQARAPRYPGEDTTPT) is disordered. The next 4 membrane-spanning stretches (helical) occupy residues 41–61 (YGIA…PLTL), 117–137 (SFAM…LISF), 149–168 (TLLV…FVFI), and 186–206 (CLGS…ASDP). The interval 234-257 (SFDGDEPTHRPPTGLGLGGATGTS) is disordered. Transmembrane regions (helical) follow at residues 271-291 (GVGL…LLLF), 304-324 (TLPL…FTMV), 378-398 (VIVF…VSGT), and 414-434 (VALL…LWPI). Asn-444 carries an N-linked (GlcNAc...) asparagine glycan. The next 4 helical transmembrane spans lie at 449–469 (VCIA…IPLF), 484–506 (YPLA…SFFG), 526–546 (KGSS…TGQV), and 549–569 (GFFF…MVDA).

The protein belongs to the ATG22 family.

The protein localises to the vacuole membrane. Functionally, vacuolar effluxer which mediate the efflux of amino acids resulting from autophagic degradation. The release of autophagic amino acids allows the maintenance of protein synthesis and viability during nitrogen starvation. This chain is Autophagy-related protein 22-2 (atg22-2), found in Aspergillus niger (strain ATCC MYA-4892 / CBS 513.88 / FGSC A1513).